Here is an 883-residue protein sequence, read N- to C-terminus: Phosphoenolpyruvate carboxylase (883 aa).

Catalysis depends on residues H138 and K546.

This sequence belongs to the PEPCase type 1 family. As to quaternary structure, homotetramer. Mg(2+) serves as cofactor.

It carries out the reaction oxaloacetate + phosphate = phosphoenolpyruvate + hydrogencarbonate. With respect to regulation, the enzyme has distinct binding sites for each of the allosteric effectors such as acetyl-CoA, fructose 1,6-bisphosphate, guanosine 3'-diphosphate 5'-diphosphate, long chain fatty acids, and L-aspartate. Its function is as follows. Forms oxaloacetate, a four-carbon dicarboxylic acid source for the tricarboxylic acid cycle. The sequence is that of Phosphoenolpyruvate carboxylase (ppc) from Salmonella typhi.